A 503-amino-acid polypeptide reads, in one-letter code: Glucosaminyl-phosphatidylinositol-acyltransferase PIGW (503 aa).

At 1 to 21 (MSQKQMKEAFVSNQNGTSVLE) the chain is on the lumenal side. The N-linked (GlcNAc...) asparagine glycan is linked to N15. The chain crosses the membrane as a helical span at residues 22–42 (ITEGLCLPALCILCRGLLIIL). Residues 43-56 (SQQLCSSLHNSRTR) are Cytoplasmic-facing. A helical membrane pass occupies residues 57–75 (FLVDFAFLIVPLVTTLTIF). The Lumenal portion of the chain corresponds to 76 to 78 (SSF). The chain crosses the membrane as a helical span at residues 79–98 (VLLEYLVAIILGAGLLYEIY). Residues 99 to 131 (CRRTCYARMPFQKICEKFLKVSLESEHIPAISC) are Cytoplasmic-facing. Residues 132-152 (FRVVNSAFTAVAILAVDFPLF) form a helical membrane-spanning segment. Residues 153–160 (PRRYAKTE) are Lumenal-facing. The helical transmembrane segment at 161-181 (LYGTGAMDYGVGGFIFGSAMV) threads the bilayer. Over 182-201 (SPEVRRKYTKGSRFCYLTKS) the chain is Cytoplasmic. The chain crosses the membrane as a helical span at residues 202–222 (LYSLWPLVFLGVGRLVAIKSV). The Lumenal portion of the chain corresponds to 223–236 (DYQEHLTEYGVHWN). The chain crosses the membrane as a helical span at residues 237–257 (FFFTLIAVKLITSLLLLICPL). The Cytoplasmic portion of the chain corresponds to 258 to 259 (NR). Residues 260 to 280 (SWVVAISIAALYQLALDFTPL) form a helical membrane-spanning segment. Residues 281–304 (KSLILYGTDGSGTRVGLLNANREG) lie on the Lumenal side of the membrane. Residues 305–325 (IISVLGYVAVHMAGVQTGLYV) traverse the membrane as a helical segment. Topologically, residues 326 to 337 (LKKRSHIKDWIK) are cytoplasmic. Residues 338–358 (VACCILLTAIGLFISLYIVQV) form a helical membrane-spanning segment. The Lumenal segment spans residues 359 to 369 (NVEVASRRMAN). Residues 370–390 (LAFCIWIVASCLILLSSLLLG) form a helical membrane-spanning segment. At 391-447 (DIILSFAKFVIKEAAVPCSWKLIQSPTANKKHLESIVFDAKRKEPTLCLITAMNRNQ) the chain is on the cytoplasmic side. S415 is modified (phosphoserine). A helical transmembrane segment spans residues 448–468 (LLFFLLSNVTTGLVNLSIDTL). Residues 469–472 (HSST) are Lumenal-facing. The chain crosses the membrane as a helical span at residues 473–493 (PWALCLLNLYMFTNCLIIYVL). The Cytoplasmic segment spans residues 494 to 503 (HLQDKTIKFW).

The protein belongs to the PIGW family.

It localises to the endoplasmic reticulum membrane. The protein operates within glycolipid biosynthesis; glycosylphosphatidylinositol-anchor biosynthesis. Functionally, acyltransferase that catalyzes the acyl transfer from an acyl-CoA at the 2-OH position of the inositol ring of glucosaminyl phosphatidylinositol (GlcN-PI) to generate glucosaminyl acyl phosphatidylinositol (GlcN-(acyl)PI) and participates in the fourth step of GPI-anchor biosynthesis. Required for the transport of GPI-anchored proteins to the plasma membrane. Acetylation during GPI-anchor biosynthesis is not essential for the subsequent mannosylation and is usually removed soon after the attachment of GPIs to proteins. This is Glucosaminyl-phosphatidylinositol-acyltransferase PIGW from Bos taurus (Bovine).